The sequence spans 34 residues: Corticostatin-6 (34 aa).

3 disulfides stabilise this stretch: Cys3-Cys31, Cys5-Cys20, and Cys10-Cys30.

It belongs to the alpha-defensin family. In terms of tissue distribution, lung, spleen, small intestine, pituitary gland, adrenal medulla and plasma.

The protein localises to the secreted. Functionally, microbicidal activity and inhibits corticotropin (ACTH) stimulated corticosterone production. The sequence is that of Corticostatin-6 from Oryctolagus cuniculus (Rabbit).